We begin with the raw amino-acid sequence, 340 residues long: GTP 3',8-cyclase (340 aa).

The 227-residue stretch at 20-246 (RFQRQYTYLR…PKAVNDGPAK (227 aa)) folds into the Radical SAM core domain. A GTP-binding site is contributed by Arg29. 2 residues coordinate [4Fe-4S] cluster: Cys36 and Cys40. Residue Tyr42 coordinates S-adenosyl-L-methionine. [4Fe-4S] cluster is bound at residue Cys43. Residue Arg79 participates in GTP binding. Gly83 provides a ligand contact to S-adenosyl-L-methionine. Residue Thr110 participates in GTP binding. Position 134 (Ser134) interacts with S-adenosyl-L-methionine. Lys171 is a GTP binding site. Met205 is an S-adenosyl-L-methionine binding site. [4Fe-4S] cluster contacts are provided by Cys268 and Cys271. 273–275 (RLR) contributes to the GTP binding site. Cys285 provides a ligand contact to [4Fe-4S] cluster.

This sequence belongs to the radical SAM superfamily. MoaA family. In terms of assembly, monomer and homodimer. [4Fe-4S] cluster is required as a cofactor.

The enzyme catalyses GTP + AH2 + S-adenosyl-L-methionine = (8S)-3',8-cyclo-7,8-dihydroguanosine 5'-triphosphate + 5'-deoxyadenosine + L-methionine + A + H(+). It functions in the pathway cofactor biosynthesis; molybdopterin biosynthesis. Functionally, catalyzes the cyclization of GTP to (8S)-3',8-cyclo-7,8-dihydroguanosine 5'-triphosphate. This chain is GTP 3',8-cyclase, found in Haemophilus ducreyi (strain 35000HP / ATCC 700724).